Consider the following 392-residue polypeptide: MYQPPTGVRDLLPLDVSQKLWIEQRLQRVFTRWGYQRIITPTLERMETLQASGSVDLQAILQLRDAEGVSLGLRPDPTPSLARAVATRLADAPLPVRLSYQMNVFRSTTQPQEFYQAGVELIGAGGVLADAEVLLVLAECLAELAPPDWTLILGAVAFTRSWLAQVAEPARHRLRRAMAELDRVAILAEAGIDEAVRSQLLLLFDLRGEPEMVLSKASSLPMSDAQRAELAELETLTGWLRGRSVPVVLDLSLVEAFDYYTGLIFEVSAGGRLIGRGGRYDHLLGSYGKPAPGAGFALNLEALQQVLLPTGKLPGRTVGGGFLVVPDGPDAWEAALAEADKLRCAPGERVEIELLGRTGEEAIAHGRALGAAVVRWVHPDGSTTDCDLAVIQ.

It belongs to the class-II aminoacyl-tRNA synthetase family. HisZ subfamily. In terms of assembly, heteromultimer composed of HisG and HisZ subunits.

The protein localises to the cytoplasm. It participates in amino-acid biosynthesis; L-histidine biosynthesis; L-histidine from 5-phospho-alpha-D-ribose 1-diphosphate: step 1/9. Functionally, required for the first step of histidine biosynthesis. May allow the feedback regulation of ATP phosphoribosyltransferase activity by histidine. This is ATP phosphoribosyltransferase regulatory subunit from Gloeobacter violaceus (strain ATCC 29082 / PCC 7421).